Consider the following 326-residue polypeptide: Flotillin-like protein FloA (326 aa).

The next 2 membrane-spanning stretches (helical) occupy residues 6-26 (IILF…GSSV) and 27-47 (SLWI…IVFM).

This sequence belongs to the flotillin-like FloA family. In terms of assembly, homooligomerizes.

It localises to the cell membrane. It is found in the membrane raft. Its function is as follows. Found in functional membrane microdomains (FMM) that may be equivalent to eukaryotic membrane rafts. FMMs are highly dynamic and increase in number as cells age. Flotillins are thought to be important factors in membrane fluidity. The protein is Flotillin-like protein FloA of Desulfosudis oleivorans (strain DSM 6200 / JCM 39069 / Hxd3) (Desulfococcus oleovorans).